Reading from the N-terminus, the 599-residue chain is Purine-uracil permease NCS1 (599 aa).

The next 12 helical transmembrane spans lie at 140–160 (LWIG…LVDL), 164–184 (WWQG…PLVL), 218–238 (LVGC…IFLL), 257–277 (TSPL…CIVW), 293–313 (ILIS…GGFG), 327–347 (FWTL…TLAL), 363–383 (IIGQ…GVAV), 411–433 (TLLA…NVVA), 445–465 (FFTF…FQPW), 474–494 (FVYT…GIIL), 525–545 (YNVA…PGFL), and 560–580 (VVYD…YWII).

This sequence belongs to the purine-cytosine permease (2.A.39) family. As to expression, expressed in roots, leaves, stems, flowers, siliques and seeds.

It is found in the plastid. The protein localises to the chloroplast envelope. It localises to the chloroplast membrane. Functionally, nucleobase-proton symporter that facilitates the uptake of nucleobases in the cells. Can transport adenine, guanine and uracil. Contributes to uracil import into plastids for plastidic uracil salvage which is essential for plant growth and development. This Arabidopsis thaliana (Mouse-ear cress) protein is Purine-uracil permease NCS1.